The primary structure comprises 361 residues: Phospho-N-acetylmuramoyl-pentapeptide-transferase (361 aa).

The next 10 helical transmembrane spans lie at 27–47 (ILAS…MIRW), 70–90 (GTPT…CLLW), 97–117 (SLWL…VDDY), 134–154 (YFWQ…NASL), 167–187 (TVTW…IVGS), 199–219 (GLAI…AYAS), 236–256 (TGEL…FLWY), 263–283 (VFMG…VAVV), 288–308 (LVLL…ILQV), and 338–358 (KVIV…LATL).

It belongs to the glycosyltransferase 4 family. MraY subfamily. The cofactor is Mg(2+).

The protein resides in the cell inner membrane. The enzyme catalyses UDP-N-acetyl-alpha-D-muramoyl-L-alanyl-gamma-D-glutamyl-meso-2,6-diaminopimeloyl-D-alanyl-D-alanine + di-trans,octa-cis-undecaprenyl phosphate = di-trans,octa-cis-undecaprenyl diphospho-N-acetyl-alpha-D-muramoyl-L-alanyl-D-glutamyl-meso-2,6-diaminopimeloyl-D-alanyl-D-alanine + UMP. The protein operates within cell wall biogenesis; peptidoglycan biosynthesis. In terms of biological role, catalyzes the initial step of the lipid cycle reactions in the biosynthesis of the cell wall peptidoglycan: transfers peptidoglycan precursor phospho-MurNAc-pentapeptide from UDP-MurNAc-pentapeptide onto the lipid carrier undecaprenyl phosphate, yielding undecaprenyl-pyrophosphoryl-MurNAc-pentapeptide, known as lipid I. In Legionella pneumophila subsp. pneumophila (strain Philadelphia 1 / ATCC 33152 / DSM 7513), this protein is Phospho-N-acetylmuramoyl-pentapeptide-transferase.